Here is a 127-residue protein sequence, read N- to C-terminus: Large ribosomal subunit protein uL18 (127 aa).

Belongs to the universal ribosomal protein uL18 family. Part of the 50S ribosomal subunit; part of the 5S rRNA/L5/L18/L25 subcomplex. Contacts the 5S and 23S rRNAs.

In terms of biological role, this is one of the proteins that bind and probably mediate the attachment of the 5S RNA into the large ribosomal subunit, where it forms part of the central protuberance. The chain is Large ribosomal subunit protein uL18 from Streptomyces griseus subsp. griseus (strain JCM 4626 / CBS 651.72 / NBRC 13350 / KCC S-0626 / ISP 5235).